Here is a 491-residue protein sequence, read N- to C-terminus: Protein nucleotidyltransferase YdiU (491 aa).

Residues Gly-88, Gly-90, Arg-91, Lys-111, Asp-123, Gly-124, Arg-174, and Arg-181 each coordinate ATP. Asp-250 serves as the catalytic Proton acceptor. Mg(2+)-binding residues include Asn-251 and Asp-260. Asp-260 serves as a coordination point for ATP.

The protein belongs to the SELO family. It depends on Mg(2+) as a cofactor. Mn(2+) is required as a cofactor.

It catalyses the reaction L-seryl-[protein] + ATP = 3-O-(5'-adenylyl)-L-seryl-[protein] + diphosphate. It carries out the reaction L-threonyl-[protein] + ATP = 3-O-(5'-adenylyl)-L-threonyl-[protein] + diphosphate. The catalysed reaction is L-tyrosyl-[protein] + ATP = O-(5'-adenylyl)-L-tyrosyl-[protein] + diphosphate. The enzyme catalyses L-histidyl-[protein] + UTP = N(tele)-(5'-uridylyl)-L-histidyl-[protein] + diphosphate. It catalyses the reaction L-seryl-[protein] + UTP = O-(5'-uridylyl)-L-seryl-[protein] + diphosphate. It carries out the reaction L-tyrosyl-[protein] + UTP = O-(5'-uridylyl)-L-tyrosyl-[protein] + diphosphate. Functionally, nucleotidyltransferase involved in the post-translational modification of proteins. It can catalyze the addition of adenosine monophosphate (AMP) or uridine monophosphate (UMP) to a protein, resulting in modifications known as AMPylation and UMPylation. This Bradyrhizobium sp. (strain BTAi1 / ATCC BAA-1182) protein is Protein nucleotidyltransferase YdiU.